We begin with the raw amino-acid sequence, 258 residues long: Rho-related GTP-binding protein RhoU (258 aa).

A disordered region spans residues 1 to 45; sequence MPPQQGDPAFPDRCEAPPVPPRRERGGRGGRGPGEPGGRGRAGGA. Basic and acidic residues predominate over residues 10–27; that stretch reads FPDRCEAPPVPPRRERGG. Positions 29–45 are enriched in gly residues; it reads GGRGPGEPGGRGRAGGA. GTP is bound by residues 56–63, 103–107, and 161–164; these read GDGAVGKT, DTAGQ, and TQSD. Residues lysine 177 and lysine 248 each participate in a glycyl lysine isopeptide (Lys-Gly) (interchain with G-Cter in ubiquitin) cross-link. Residue cysteine 256 is the site of S-palmitoyl cysteine attachment.

It belongs to the small GTPase superfamily. Rho family. Interacts with PAK1. Interacts with PAK3. Interacts with ARHGAP30 in a GTP-independent manner. In its GTP-loaded conformation, interacts with ARHGAP31. Interacts with PTK2B/PYK2. Interacts with PAK4; the interaction is PAK4 kinase activity-independent and protects RHOU from ubiquitination. Requires Mg(2+) as cofactor. Ubiquitinated. 'Lys-48'-linked ubiquitination at Lys-177 and Lys-248 by the ECS(RAB40A) complex leading to its degradation. Post-translationally, tyrosine phosphorylated by SRC in response to PTK2B/PYK2 activation. In terms of tissue distribution, ubiquitously expressed in all tissues examined. Expressed at high levels in the stomach, small intestine, brain, skeletal muscle and placenta.

The protein resides in the cell membrane. It is found in the golgi apparatus membrane. It localises to the cell junction. The protein localises to the focal adhesion. Its subcellular location is the cell projection. The protein resides in the podosome. Its function is as follows. Binds to and activates protein kinase PAK1. Plays a role in the regulation of cell morphology, cytoskeletal organization and focal adhesion assembly during cell migration. Also stimulates quiescent cells to reenter the cell cycle. Has no detectable GTPase activity but its high intrinsic guanine nucleotide exchange activity suggests it is constitutively GTP-bound. The protein is Rho-related GTP-binding protein RhoU of Homo sapiens (Human).